A 246-amino-acid polypeptide reads, in one-letter code: mRNA-decapping protein g5R (246 aa).

Residues 93-239 form the Nudix hydrolase domain; it reads QKFRKNWLLP…IIGPAFNFIK (147 aa). Residues 128–149 carry the Nudix box motif; the sequence is GKPKEDESDLTCAIREFEEETG. Glu-134 is a binding site for Mg(2+). The active-site Nucleophile is the Glu-143. The Mg(2+) site is built by Glu-147 and Asp-169.

The protein belongs to the Nudix hydrolase family. DIPP subfamily. Interacts with host RPL23A. The cofactor is Mg(2+). It depends on Mn(2+) as a cofactor.

It localises to the host rough endoplasmic reticulum. It catalyses the reaction diphospho-myo-inositol polyphosphate + H2O = myo-inositol polyphosphate + phosphate.. In terms of biological role, decapping enzyme required for the removal of the 5'-end m7GpppN cap tethered to viral and host mRNAs to allow their decay in cells. May therefore accelerate viral and cellular mRNA turnover to eliminate competing host mRNAs and allow stage-specific synthesis of viral proteins. Acceleration of the turnover of cellular transcripts may even promote the shutoff of host protein synthesis. In addition to the mRNA cap, g5R also efficiently hydrolyzes diphosphoinositol polyphosphates. Down-regulation of the level of PP-InsP5 (diphosphoinositol pentakisphosphate) may play a role in viral manipulation of the cellular secretory pathway, a step necessary for the formation of virions. Binds viral and cellular poly(A) mRNAs, thereby decreasing both types of mRNAs. This African swine fever virus (isolate Warthog/Namibia/Wart80/1980) (ASFV) protein is mRNA-decapping protein g5R.